A 1230-amino-acid chain; its full sequence is Serine/threonine-protein kinase CST20 (1230 aa).

Residues 1–20 (MSILSENNPTPTSITDPNKS) are compositionally biased toward polar residues. 2 disordered regions span residues 1 to 384 (MSIL…TAHN) and 413 to 470 (SSLE…HSQE). Composition is skewed to low complexity over residues 57–70 (NTTSANTSSLSLGS) and 96–125 (SGSGDIDDSQQSHNNNNNNNNNNNESNPES). The segment covering 150–161 (HQGDDSDNEKQY) has biased composition (basic and acidic residues). Polar residues-rich tracts occupy residues 175–197 (DSYSPGTLESPGTLNALETNNVS), 207–224 (TSSLEDLSLSLQHQNENA), and 237–246 (PTSKTSSFHD). Positions 248-257 (SSVISSSTSV) are enriched in low complexity. Composition is skewed to polar residues over residues 262–277 (SNPTSTRGSHLSSYKS) and 311–330 (DTLSSATNSPNLLRNDTLQG). Composition is skewed to low complexity over residues 349–381 (NTSATSRNTSGTSTSTVVKNSRSGTSKSTSTST) and 439–468 (KVRGVFSSMFGKNKSTSSSSSSNSGSNSHS). The CRIB domain occupies 475-488 (ISTPFNAKHLAHVG). Disordered stretches follow at residues 545–831 (FHFD…ALAD) and 867–919 (LREK…KQAA). Over residues 550–561 (NKSSSSGWSNEN) the composition is skewed to polar residues. The span at 570–581 (SNSGSGSGGGGA) shows a compositional bias: gly residues. A compositionally biased stretch (polar residues) spans 604–613 (ITPSQSMPTK). Residues 614 to 628 (TESKQSENQHPHEDN) are compositionally biased toward basic and acidic residues. Residues 629 to 642 (ATQYTPRTPTSHVQ) are compositionally biased toward polar residues. Low complexity-rich tracts occupy residues 670–683 (PSSQSLPRSDSQSD), 696–710 (SPSKIKIRSISSKSL), and 736–749 (SIPKSKSHSASLSS). The segment covering 750-761 (QLRPATNGSTTA) has biased composition (polar residues). Pro residues predominate over residues 789–807 (APPPPPSAPPAPPVPPAPP). Residues 811–826 (LSEQTSEIPQQRTAPS) show a composition bias toward polar residues. The span at 867–876 (LREKNERQNR) shows a compositional bias: basic and acidic residues. Positions 877–892 (QQETGQNNADTASGGS) are enriched in polar residues. One can recognise a Protein kinase domain in the interval 953-1205 (YVDLVKIGQG…ADELLHDNFI (253 aa)). Residues 959–967 (IGQGASGGV) and Lys983 each bind ATP. Asp1073 (proton acceptor) is an active-site residue.

This sequence belongs to the protein kinase superfamily. STE Ser/Thr protein kinase family. STE20 subfamily.

It is found in the cytoplasm. The protein localises to the nucleus. The catalysed reaction is L-seryl-[protein] + ATP = O-phospho-L-seryl-[protein] + ADP + H(+). It carries out the reaction L-threonyl-[protein] + ATP = O-phospho-L-threonyl-[protein] + ADP + H(+). MAP4K component of the MAPK pathway required for the mating pheromone response, and the regulation of cell polarity and cell cycle. Phosphorylates histone H2B to form H2BS10ph. Required for hyphal formation and virulence. In Candida albicans (Yeast), this protein is Serine/threonine-protein kinase CST20 (CST20).